A 731-amino-acid polypeptide reads, in one-letter code: Dynein axonemal intermediate chain 7 (731 aa).

Disordered stretches follow at residues 1-50 (MPPK…NERL) and 285-320 (QNTE…VRSE). 2 stretches are compositionally biased toward basic and acidic residues: residues 17-50 (KAEK…NERL) and 296-320 (GKME…VRSE).

This sequence belongs to the DNAI7 family. Part of the multisubunit axonemal dynein complex formed at least of two heavy chains and a number of intermediate and light chains.

Its subcellular location is the cell projection. The protein localises to the cilium. It is found in the cytoplasm. Functionally, via its association with the multisubunit axonemal dynein complex, may be potentially involved in the regulation of cilia function. The sequence is that of Dynein axonemal intermediate chain 7 (dnai7) from Danio rerio (Zebrafish).